We begin with the raw amino-acid sequence, 382 residues long: Flap endonuclease 1 (382 aa).

The segment at methionine 1–arginine 104 is N-domain. Position 34 (aspartate 34) interacts with Mg(2+). Arginine 47 and arginine 70 together coordinate DNA. Positions 86, 158, 160, 179, and 181 each coordinate Mg(2+). Residues glutamate 122–histidine 253 form an I-domain region. Glutamate 158 provides a ligand contact to DNA. DNA-binding residues include glycine 231 and aspartate 233. Aspartate 233 is a Mg(2+) binding site. Residues threonine 336–phenylalanine 344 are interaction with PCNA. Residues lysine 358 to lysine 382 are disordered. The segment covering arginine 359 to lysine 368 has biased composition (basic and acidic residues). The span at lysine 369–lysine 382 shows a compositional bias: basic residues.

It belongs to the XPG/RAD2 endonuclease family. FEN1 subfamily. Interacts with PCNA. Three molecules of crn-1 bind to one PCNA trimer with each molecule binding to one PCNA monomer. PCNA stimulates the nuclease activity without altering cleavage specificity. Interacts with cps-6. The cofactor is Mg(2+). In terms of processing, phosphorylated. Phosphorylation upon DNA damage induces relocalization to the nuclear plasma.

The protein localises to the nucleus. It localises to the nucleolus. It is found in the nucleoplasm. The protein resides in the mitochondrion. In terms of biological role, structure-specific nuclease with 5'-flap endonuclease and 5'-3' exonuclease activities involved in DNA replication and repair. During DNA replication, cleaves the 5'-overhanging flap structure that is generated by displacement synthesis when DNA polymerase encounters the 5'-end of a downstream Okazaki fragment. It enters the flap from the 5'-end and then tracks to cleave the flap base, leaving a nick for ligation. Also involved in the long patch base excision repair (LP-BER) pathway, by cleaving within the apurinic/apyrimidinic (AP) site-terminated flap. Acts as a genome stabilization factor that prevents flaps from equilibrating into structures that lead to duplications and deletions. Also possesses 5'-3' exonuclease activity on nicked or gapped double-stranded DNA, and exhibits RNase H activity. Also involved in replication and repair of rDNA and in repairing mitochondrial DNA. Can associate and cooperate with cps-6 to promote stepwise DNA fragmentation, utilizing the endonuclease activity of cps-6 and both of its own 5'-3' exonuclease activity and gap-dependent endonuclease activity. May play a critical role in switching the state of cells from DNA replication/repair to DNA degradation during apoptosis. In Caenorhabditis elegans, this protein is Flap endonuclease 1.